The following is a 248-amino-acid chain: NAD kinase (248 aa).

D45 serves as the catalytic Proton acceptor. Residues 45-46 (DG), R50, 110-111 (NE), and D138 contribute to the NAD(+) site.

The protein belongs to the NAD kinase family. The cofactor is a divalent metal cation.

The protein localises to the cytoplasm. It carries out the reaction NAD(+) + ATP = ADP + NADP(+) + H(+). Involved in the regulation of the intracellular balance of NAD and NADP, and is a key enzyme in the biosynthesis of NADP. Catalyzes specifically the phosphorylation on 2'-hydroxyl of the adenosine moiety of NAD to yield NADP. This chain is NAD kinase, found in Sulfurisphaera tokodaii (strain DSM 16993 / JCM 10545 / NBRC 100140 / 7) (Sulfolobus tokodaii).